Reading from the N-terminus, the 82-residue chain is Protein WFDC11 (82 aa).

A signal peptide spans 1 to 21; sequence MKPSWFPCLVFLCMLLLSALG.

It is found in the secreted. The sequence is that of Protein WFDC11 (Wfdc11) from Mus musculus (Mouse).